Here is a 212-residue protein sequence, read N- to C-terminus: MKGKFIVIEGIDGCGKTTQIDELSKWLPISGLLKKESKLITTREPGGSLLGKKLRRLILDNNENNKPSSLAELLLYSADRAEHVSKIILPALNNNDWVISDRFSDSTLAYQGYGRNINLEIIKNIESIVCQGASPDLTFFLEISPEESIFRRKNEIPDRIESEGIRFLERVNEGFKLIAKQKNWKVISASQNIKTISNQIKETLLNNFSNAK.

Gly-10–Thr-17 contacts ATP.

It belongs to the thymidylate kinase family.

The enzyme catalyses dTMP + ATP = dTDP + ADP. Phosphorylation of dTMP to form dTDP in both de novo and salvage pathways of dTTP synthesis. The polypeptide is Thymidylate kinase (Prochlorococcus marinus (strain MIT 9301)).